The primary structure comprises 158 residues: SsrA-binding protein (158 aa).

Positions 131 to 158 (GKKTHDKRETEKKRDWNREKARLLRDRG) are disordered. Basic and acidic residues predominate over residues 136 to 158 (DKRETEKKRDWNREKARLLRDRG).

Belongs to the SmpB family.

The protein localises to the cytoplasm. Functionally, required for rescue of stalled ribosomes mediated by trans-translation. Binds to transfer-messenger RNA (tmRNA), required for stable association of tmRNA with ribosomes. tmRNA and SmpB together mimic tRNA shape, replacing the anticodon stem-loop with SmpB. tmRNA is encoded by the ssrA gene; the 2 termini fold to resemble tRNA(Ala) and it encodes a 'tag peptide', a short internal open reading frame. During trans-translation Ala-aminoacylated tmRNA acts like a tRNA, entering the A-site of stalled ribosomes, displacing the stalled mRNA. The ribosome then switches to translate the ORF on the tmRNA; the nascent peptide is terminated with the 'tag peptide' encoded by the tmRNA and targeted for degradation. The ribosome is freed to recommence translation, which seems to be the essential function of trans-translation. This Brucella ovis (strain ATCC 25840 / 63/290 / NCTC 10512) protein is SsrA-binding protein.